Reading from the N-terminus, the 129-residue chain is Glycine cleavage system H protein (129 aa).

The Lipoyl-binding domain occupies 24–106; sequence SYTVGITEHA…YGEGWFFRVM (83 aa). N6-lipoyllysine is present on Lys65.

The protein belongs to the GcvH family. As to quaternary structure, the glycine cleavage system is composed of four proteins: P, T, L and H. Requires (R)-lipoate as cofactor.

Functionally, the glycine cleavage system catalyzes the degradation of glycine. The H protein shuttles the methylamine group of glycine from the P protein to the T protein. The protein is Glycine cleavage system H protein of Shewanella putrefaciens (strain CN-32 / ATCC BAA-453).